The following is a 528-amino-acid chain: MSKVAIIDFGSQFTQLLARRIRDLNIYSEIFLPNVAFDLIKGVDAFILSGGPRSVPNSDGIPKIVHDILQFNEKTSIPVLGICYGLQILSNYFESDVVSNCNKEFGKTILNIIKNSKIIENIWESGDQACVWMSHADSVYNIPRGFEVIAYSVLNNSIAMVANEQRRIYGMQFHPEVYHTPDGINLLANFLDIAGCQKDWTVTSFIDDQQDAIKKQIGNKKVIAALSGGVDSSVAAALTYKAIGDQLHCVFIDNGLLRYNEVEKVKQLFINELKIPVTIVDKSAVFLNRLKSITDPERKRKIIGETFIEIFEEEANKLEGVEFLMQGTIYPDVVESGGSGSIAKESVVIKSHHNVGGLPKTMKFKLVEPLKYLFKDEVRILGRNLGISTEILMRHPFPGPGLAVRIIGEITEEKVKMLQAADDIYINLIKKYELYDVMWQAFVVLLPVKTVGVMGDRRTYGHACVLRAVNSHDGMTAESFPFCMDEETQWKFFKCIQEASNAIINSVNGINRVAYDITSKPPATIEWE.

A Glutamine amidotransferase type-1 domain is found at 3 to 199; that stretch reads KVAIIDFGSQ…FLDIAGCQKD (197 aa). The Nucleophile role is filled by Cys-83. Catalysis depends on residues His-174 and Glu-176. Positions 200–394 constitute a GMPS ATP-PPase domain; that stretch reads WTVTSFIDDQ…LGISTEILMR (195 aa). 227-233 serves as a coordination point for ATP; that stretch reads SGGVDSS.

In terms of assembly, homodimer.

It carries out the reaction XMP + L-glutamine + ATP + H2O = GMP + L-glutamate + AMP + diphosphate + 2 H(+). The protein operates within purine metabolism; GMP biosynthesis; GMP from XMP (L-Gln route): step 1/1. Functionally, catalyzes the synthesis of GMP from XMP. The protein is GMP synthase [glutamine-hydrolyzing] of Ehrlichia ruminantium (strain Welgevonden).